A 440-amino-acid chain; its full sequence is 2-methylisoborneol synthase (440 aa).

2 disordered regions span residues 1 to 33 (MPDSGTLGTPPPEQGPTPPTTLPDVPAPVIPSA) and 46 to 74 (LHPPVTVPDPAPPPPPAPAAGNPPDTVTG). Pro residues-rich tracts occupy residues 9–29 (TPPPEQGPTPPTTLPDVPAPV) and 50–63 (VTVPDPAPPPPPAP). Residues aspartate 197, aspartate 198, glutamate 202, asparagine 345, serine 349, and glutamate 353 each coordinate Mg(2+).

Belongs to the terpene synthase family. 2-methylisoborneol synthase subfamily. Mg(2+) is required as a cofactor.

It catalyses the reaction (E)-2-methylgeranyl diphosphate + H2O = 2-methylisoborneol + diphosphate. Functionally, catalyzes the cyclization of 2-methylgeranyl diphosphate (2-MeGPP) to 2-methylisoborneol (2-MIB), which likely involves the intermediacy of 2-methyllinalyl diphosphate. Is also able to catalyze the cyclization of geranyl diphosphate (GPP), albeit with much lower efficiency, leading to the formation of a complex mixture of cyclic monoterpenes, consisting of alpha-pinene (6%), beta-pinene (23%), limonene (32%), gamma-terpinene (29%), and delta-terpinene (10%). The chain is 2-methylisoborneol synthase from Streptomyces coelicolor (strain ATCC BAA-471 / A3(2) / M145).